Here is an 834-residue protein sequence, read N- to C-terminus: MSQTIDLTLDGLSCGHCVKRVKESLEQRPDVEQADVSITEAHVTGTASAEQLIETIKQAGYDASVSHPKAKPLAESSIPSEALTAVSEALPAATADDDDSQQLLLSGMSCASCVTRVQNALQSVPGVTQARVNLAERTALVMGSASPQDLVQAVEKAGYGAEAIEDDAKRRERQQETAVATMKRFRWQAIVALAVGIPVMVWGMIGDNMMVTADNRSLWLVIGLITLAVMVFAGGHFYRSAWKSLLNGAATMDTLVALGTGVAWLYSMSVNLWPQWFPMEARHLYYEASAMIIGLINLGHMLEARARQRSSKALEKLLDLTPPTARLVTDEGEKSVPLAEVQPGMLLRLTTGDRVPVDGEITQGEAWLDEAMLTGEPIPQQKGEGDSVHAGTVVQDGSVLFRASAVGSHTTLSRIIRMVRQAQSSKPEIGQLADKISAVFVPVVVVIALVSAAIWYFFGPAPQIVYTLVIATTVLIIACPCALGLATPMSIISGVGRAAEFGVLVRDADALQRASTLDTVVFDKTGTLTEGKPQVVAVKTFADFDEAQALRLAAALEQGSSHPLARAILDKASDMQLPQVNGFRTLRGLGVSGEAEGHALLLGNQALLNDQQVDTKAIEADISAQASQGATPVLLAVDGKAVALLAVRDPLRSDSVAALQRLHKAGYRLVMLTGDNPTTANAIAKEAGIDEVIAGVLPDGKAEAIKRLQSEGRQVAMVGDGINDAPALAQADVGIAMGGGSDVAIETAAITLMRHSLMGVADALAISRATLRNMKQNLLGAFIYNSIGIPVAAGILWPFTGTLLNPVVAGAAMALSSITVVSNANRLLRFKPKE.

2 HMA domains span residues 3–64 and 99–162; these read QTID…YDAS and DSQQ…YGAE. Cu(+)-binding residues include cysteine 14, cysteine 17, cysteine 110, and cysteine 113. A run of 6 helical transmembrane segments spans residues 187-207, 218-238, 254-274, 284-304, 438-458, and 464-484; these read WQAI…MIGD, LWLV…GHFY, TLVA…NLWP, LYYE…MLEA, AVFV…WYFF, and IVYT…CALG. Aspartate 523 (4-aspartylphosphate intermediate) is an active-site residue. The Mg(2+) site is built by aspartate 720 and aspartate 724. A run of 2 helical transmembrane segments spans residues 779–799 and 801–821; these read LGAF…LWPF and GTLL…ITVV.

Belongs to the cation transport ATPase (P-type) (TC 3.A.3) family. Type IB subfamily.

Its subcellular location is the cell inner membrane. It localises to the cytoplasm. It catalyses the reaction Cu(+)(in) + ATP + H2O = Cu(+)(out) + ADP + phosphate + H(+). Functionally, involved in Cu(+) export. In terms of biological role, probably also encodes a cytoplasmic copper chaperone CopA(Z) that is produced by programmed ribosomal frameshifting. The chain is Copper-exporting P-type ATPase (copA) from Escherichia coli O157:H7.